The chain runs to 1134 residues: MMVEPNQLVQHLETFVDTNRSSSQQDDSLKAIASSLENDSLSITQLVREMEMYLTTTDNLVRARGILLLAEILDCLKAKPLNDTIVHTLVGFFSEKLADWRAMCGALVGCLALLKRKDVAGVVTDIDVQAMAKSMIQNVQVQALALHERKLAFELLECLLQQHSEAILTMGDLLVYAMCEAIDGEKDPQCLMIVFHLVELLAPLFPSPSGPLASDASDLFEVIGCYFPLHFTHTKDDEANIRREDLSRGLLLAISSTPFFEPYAIPLLLEKLSSSLPVAKVDSLKCLKDCALKYGVDRMKKHYGALWSALKDTFYSSTGTHLSFAIESLTSPGFEMNEIHRDAVSLLQRLVKQDISFLGFVVDDTRINTVFDTIYRYPQYKEMPDPSKLEVLVISQILSVSAKASVQSCNIIFEAIFFRLMNTLGIVEKTSTGDVVQNGNSTVSTRLYHGGLHLCIELLAASKDLILGFEECSPTSGCANSGCSMVKSFSVPLIQVFTSAVCRSNDDSVVDVYLGVKGLLTMGMFRGGSSPVSRTEFENILVTLTSIITAKSGKTVVWELALKALVCIGSFIDRYHESDKAMSYMSIVVDNLVSLACSSHCGLPYQMILEATSEVCSTGPKYVEKMVQGLEEAFCSSLSDFYVNGNFESIDNCSQLLKCLTNKLLPRVAEIDGLEQLLVHFAISMWKQIEFCGVFSCDFNGREFVEAAMTTMRQVVGIALVDSQNSIIQKAYSVVSSCTLPAMESIPLTFVALEGLQRDLSSRDELILSLFASVIIAASPSASIPDAKSLIHLLLVTLLKGYIPAAQALGSMVNKLGSGSGGTNTSRDCSLEEACAIIFHADFASGKKISSNGSAKIIVGSETTMSKICLGYCGSLDLQTRAITGLAWIGKGLLMRGNERVNEIALVLVECLKSNNCSGHALHPSAMKHAADAFSIIMSDSEVCLNRKFHAVIRPLYKQRCFSTIVPILESLIMNSQTSLSRTMLHVALAHVISNVPVTVILDNTKKLQPLILEGLSVLSLDSVEKETLFSLLLVLSGTLTDTKGQQSASDNAHIIIECLIKLTSYPHLMVVRETSIQCLVALLELPHRRIYPFRREVLQAIEKSLDDPKRKVREEAIRCRQAWASITSGSNIF.

HEAT repeat units follow at residues Gln959–Val998, Leu1002–Gln1047, Ser1050–Arg1089, and Tyr1092–Gly1130.

Belongs to the MET18/MMS19 family. In terms of assembly, part of a complex composed of AE7, CIA1, MMS19 and NAR1. Interacts with AE7.

The protein localises to the nucleus. It is found in the cytoplasm. Its function is as follows. May select specific target apoproteins to which a Fe-S cluster produced by the cytosolic iron-sulfur (Fe-S) protein assembly (CIA) pathway is transferred. The protein is MMS19 nucleotide excision repair protein homolog of Arabidopsis thaliana (Mouse-ear cress).